The sequence spans 123 residues: Large ribosomal subunit protein uL18 (123 aa).

The protein belongs to the universal ribosomal protein uL18 family. In terms of assembly, part of the 50S ribosomal subunit; part of the 5S rRNA/L5/L18/L25 subcomplex. Contacts the 5S and 23S rRNAs.

Functionally, this is one of the proteins that bind and probably mediate the attachment of the 5S RNA into the large ribosomal subunit, where it forms part of the central protuberance. In Protochlamydia amoebophila (strain UWE25), this protein is Large ribosomal subunit protein uL18.